The primary structure comprises 178 residues: CASP-like protein 5A1 (178 aa).

Low complexity predominate over residues 1–11 (MFASRPAVHPV). The disordered stretch occupies residues 1 to 25 (MFASRPAVHPVEAPPPPDPAEQPRG). Residues 1 to 37 (MFASRPAVHPVEAPPPPDPAEQPRGVLMKDLPGMPGT) lie on the Cytoplasmic side of the membrane. The helical transmembrane segment at 38-58 (AGGLGLRLAQFAFAAVALAVM) threads the bilayer. The Extracellular portion of the chain corresponds to 59–69 (ASTNDFPSVTS). The chain crosses the membrane as a helical span at residues 70–90 (FCFLVAAAILQCLWSFSLAIV). Topologically, residues 91-105 (DIYALLVKRCLRNRR) are cytoplasmic. Residues 106-126 (AVCLFAIGDGITAALTFSAAC) traverse the membrane as a helical segment. Over 127–152 (ASSGITVLIDNDLDLCSENHCASFES) the chain is Extracellular. The helical transmembrane segment at 153–173 (ATAMAFLSWFALSPSFLLNFW) threads the bilayer. Residues 174 to 178 (SMASG) are Cytoplasmic-facing.

This sequence belongs to the Casparian strip membrane proteins (CASP) family. In terms of assembly, homodimer and heterodimers.

The protein localises to the cell membrane. This Oryza sativa subsp. japonica (Rice) protein is CASP-like protein 5A1.